The sequence spans 397 residues: S-adenosylmethionine synthase (397 aa).

His-15 serves as a coordination point for ATP. Asp-17 is a Mg(2+) binding site. Glu-43 serves as a coordination point for K(+). The L-methionine site is built by Glu-56 and Gln-99. The interval 99 to 109 (QSGDIAMGVDE) is flexible loop. ATP contacts are provided by residues 175 to 177 (DGK), 241 to 242 (RF), Asp-250, 256 to 257 (RK), Ala-273, and Lys-277. Asp-250 contributes to the L-methionine binding site. An L-methionine-binding site is contributed by Lys-281.

This sequence belongs to the AdoMet synthase family. As to quaternary structure, homotetramer; dimer of dimers. The cofactor is Mg(2+). K(+) is required as a cofactor.

The protein resides in the cytoplasm. It carries out the reaction L-methionine + ATP + H2O = S-adenosyl-L-methionine + phosphate + diphosphate. It functions in the pathway amino-acid biosynthesis; S-adenosyl-L-methionine biosynthesis; S-adenosyl-L-methionine from L-methionine: step 1/1. Catalyzes the formation of S-adenosylmethionine (AdoMet) from methionine and ATP. The overall synthetic reaction is composed of two sequential steps, AdoMet formation and the subsequent tripolyphosphate hydrolysis which occurs prior to release of AdoMet from the enzyme. In Clostridioides difficile (strain 630) (Peptoclostridium difficile), this protein is S-adenosylmethionine synthase.